A 554-amino-acid polypeptide reads, in one-letter code: Dihydroxy-acid dehydratase (554 aa).

Aspartate 78 lines the Mg(2+) pocket. Position 119 (cysteine 119) interacts with [2Fe-2S] cluster. Mg(2+)-binding residues include aspartate 120 and lysine 121. An N6-carboxylysine modification is found at lysine 121. Cysteine 191 contributes to the [2Fe-2S] cluster binding site. Residue glutamate 442 coordinates Mg(2+). Serine 468 serves as the catalytic Proton acceptor.

This sequence belongs to the IlvD/Edd family. As to quaternary structure, homodimer. [2Fe-2S] cluster is required as a cofactor. It depends on Mg(2+) as a cofactor.

It catalyses the reaction (2R)-2,3-dihydroxy-3-methylbutanoate = 3-methyl-2-oxobutanoate + H2O. The enzyme catalyses (2R,3R)-2,3-dihydroxy-3-methylpentanoate = (S)-3-methyl-2-oxopentanoate + H2O. Its pathway is amino-acid biosynthesis; L-isoleucine biosynthesis; L-isoleucine from 2-oxobutanoate: step 3/4. It functions in the pathway amino-acid biosynthesis; L-valine biosynthesis; L-valine from pyruvate: step 3/4. Functions in the biosynthesis of branched-chain amino acids. Catalyzes the dehydration of (2R,3R)-2,3-dihydroxy-3-methylpentanoate (2,3-dihydroxy-3-methylvalerate) into 2-oxo-3-methylpentanoate (2-oxo-3-methylvalerate) and of (2R)-2,3-dihydroxy-3-methylbutanoate (2,3-dihydroxyisovalerate) into 2-oxo-3-methylbutanoate (2-oxoisovalerate), the penultimate precursor to L-isoleucine and L-valine, respectively. The protein is Dihydroxy-acid dehydratase of Thermotoga petrophila (strain ATCC BAA-488 / DSM 13995 / JCM 10881 / RKU-1).